The chain runs to 94 residues: Integration host factor subunit beta (94 aa).

It belongs to the bacterial histone-like protein family. In terms of assembly, heterodimer of an alpha and a beta chain.

Functionally, this protein is one of the two subunits of integration host factor, a specific DNA-binding protein that functions in genetic recombination as well as in transcriptional and translational control. The chain is Integration host factor subunit beta from Actinobacillus succinogenes (strain ATCC 55618 / DSM 22257 / CCUG 43843 / 130Z).